Reading from the N-terminus, the 288-residue chain is MSNLKQLRTRIKSVKSTQKITKAMQLVSASKLTKIKNQIAHSNFYVEAISKMMSTVLSADIYDFPIEAQKFFNTETNKANLLIVMTSERGLCRTFNYMIIKQVKSDIETLKSKGEKIKLIIIGKKGYEALKKPYESYIDSYFELPKNHDENLMLQIKQKIMALVANLEVSNCTIYFNRFKNAMTQSMTKQQILPIEKYHDDSKIEEANYEYEGENLIQNLINLYVNSQINYALLQNRASEEGSRMTAMENATNNAHDIINKLVLKLNRSRQAIITMELIEIIAGSEAV.

This sequence belongs to the ATPase gamma chain family. As to quaternary structure, F-type ATPases have 2 components, CF(1) - the catalytic core - and CF(0) - the membrane proton channel. CF(1) has five subunits: alpha(3), beta(3), gamma(1), delta(1), epsilon(1). CF(0) has three main subunits: a, b and c.

It is found in the cell inner membrane. Functionally, produces ATP from ADP in the presence of a proton gradient across the membrane. The gamma chain is believed to be important in regulating ATPase activity and the flow of protons through the CF(0) complex. In Rickettsia bellii (strain OSU 85-389), this protein is ATP synthase gamma chain.